The following is a 141-amino-acid chain: Sporulation-specific cell division protein SsgB (141 aa).

It belongs to the SsgA family. Interacts with SsgA. Interacts with FtsZ (via N-terminus).

It localises to the cell septum. Functionally, involved in sporulation-specific cell division. Required for early stages of sporulation. Important in the process of growth cessation prior to sporulation-specific cell division. Recruits cell division protein FtsZ to the future septum sites and tethers the contractile ring structure (Z ring) to the cytoplasmic membrane during sporulation. Stimulates polymerization and filament length of FtsZ in vitro. This Saccharopolyspora erythraea (strain ATCC 11635 / DSM 40517 / JCM 4748 / NBRC 13426 / NCIMB 8594 / NRRL 2338) protein is Sporulation-specific cell division protein SsgB.